The sequence spans 187 residues: Elongation factor P (187 aa).

Belongs to the elongation factor P family.

Its subcellular location is the cytoplasm. It participates in protein biosynthesis; polypeptide chain elongation. Involved in peptide bond synthesis. Stimulates efficient translation and peptide-bond synthesis on native or reconstituted 70S ribosomes in vitro. Probably functions indirectly by altering the affinity of the ribosome for aminoacyl-tRNA, thus increasing their reactivity as acceptors for peptidyl transferase. In Helicobacter pylori (strain G27), this protein is Elongation factor P.